A 134-amino-acid polypeptide reads, in one-letter code: ATP synthase epsilon chain (134 aa).

The protein belongs to the ATPase epsilon chain family. F-type ATPases have 2 components, CF(1) - the catalytic core - and CF(0) - the membrane proton channel. CF(1) has five subunits: alpha(3), beta(3), gamma(1), delta(1), epsilon(1). CF(0) has three main subunits: a, b and c.

It localises to the cell membrane. In terms of biological role, produces ATP from ADP in the presence of a proton gradient across the membrane. The polypeptide is ATP synthase epsilon chain (Clostridium botulinum (strain Eklund 17B / Type B)).